Consider the following 347-residue polypeptide: Protein RecA (347 aa).

67 to 74 (GPESSGKT) provides a ligand contact to ATP.

The protein belongs to the RecA family.

It is found in the cytoplasm. Can catalyze the hydrolysis of ATP in the presence of single-stranded DNA, the ATP-dependent uptake of single-stranded DNA by duplex DNA, and the ATP-dependent hybridization of homologous single-stranded DNAs. It interacts with LexA causing its activation and leading to its autocatalytic cleavage. The polypeptide is Protein RecA (Helicobacter pylori (strain Shi470)).